Here is a 451-residue protein sequence, read N- to C-terminus: uncharacterized protein (451 aa).

The TRAM domain maps to 1–59 (MLKKNDIVEVEISDLSHDGAGIAKVDGLVFFVDNALPTEKIRMRVLKVKKNIAFGKVES). Residues glutamine 283, tyrosine 312, glutamate 333, and aspartate 381 each contribute to the S-adenosyl-L-methionine site. Cysteine 408 functions as the Nucleophile in the catalytic mechanism.

Belongs to the class I-like SAM-binding methyltransferase superfamily. RNA M5U methyltransferase family.

This is an uncharacterized protein from Streptococcus mutans serotype c (strain ATCC 700610 / UA159).